The following is a 354-amino-acid chain: MYGNNNPGSNNNNGGYPPYGYNKSSGGRGFGMSHSLPSGMSRYAFSPQDTEFSFPSSSSRRGYNEFPGGGGIGIGANGGSANNLGGNMCNLLPMTSNNSLSNLCGLSLGSGGSDDHMMMHDQRSSNTNLIVNYLPQDMTDRELYALFRAIGPINTCRIMRDYKTGYSFGYAFVDFTSEMDSQRAIKVLNGITVRNKRLKVSYARPGGESIKDTNLYVTNLPRTITDDQLDTIFGKYGSIVQKNILRDKLTGRPRGVAFVRYNKREEAQEAISALNNVIPEGGSQPLSVRLAQEHGKAKAAHFMSQIGVPSANAPPPPPPPPHMAFNNMVHRGRSIKSQQRFQKTHPYFDAQKFI.

The tract at residues 1–20 (MYGNNNPGSNNNNGGYPPYG) is disordered. RRM domains lie at 127–205 (TNLI…YARP) and 213–293 (TNLY…LAQE).

As to quaternary structure, part of a complex containing fl(2)d, Sxl and vir. Interacts with nito. Interacts with Unr; cooperates with Sxl to prevent translation of msl-2 transcripts. Interacts with how; promoting nuclear retention of msl-2 transcripts. As to expression, the embryo-specific isoform is not expressed in the pole cells, which are the progenitors of the germline.

It is found in the nucleus. Its subcellular location is the cytoplasm. In terms of biological role, sex determination switch protein, which controls sexual development and dosage compensation in females. Sxl protein is only active in females: it is inactive in males throughout development. Acts as a mRNA-binding protein, which specifically binds to a subset of pre-mRNAs and mRNAs and regulates their processing and/or translation. Promotes sexual development by controlling the female-specific alternative splicing of the transformer (tra) pre-mRNA: binds tightly to a characteristic uridine-rich polypyrimidine tract at the non-sex specific 3' splice site in one of the tra introns, preventing the general splicing factor U2AF from binding to this site and forcing it to bind to the female-specific 3' splice site. Acts as an inhibitor of dosage compensation in females by preventing production of msl-2 protein, an essential component of the MSL complex, the complex that mediates X-chromosome dosage compensation. Specifially binds to uridine stretches in both the 5'- and 3'-UTR of msl-2 transcripts. Sxl first acts at the splicing level by promoting retention of an intron in the 5' UTR of msl-2 pre-mRNA. The retained intron contains Sxl-binding sites that are required for subsequent steps of repression: after msl-2 mRNA export into the cytoplasm, Sxl coordinates its translational repression by targeting early steps of translation initiation. Together with how, Sxl also prevents production of msl-2 protein by preventing nuclear export of msl-2 transcripts. This chain is Protein sex-lethal, found in Drosophila subobscura (Fruit fly).